A 121-amino-acid chain; its full sequence is Large ribosomal subunit protein uL14c (121 aa).

The protein belongs to the universal ribosomal protein uL14 family. In terms of assembly, part of the 50S ribosomal subunit.

It is found in the plastid. The protein resides in the chloroplast. Functionally, binds to 23S rRNA. The sequence is that of Large ribosomal subunit protein uL14c from Oedogonium cardiacum (Filamentous green alga).